Consider the following 172-residue polypeptide: uncharacterized protein (172 aa).

Positions 1–17 are enriched in basic and acidic residues; the sequence is MISLDKDENEIEHHNEE. The interval 1–27 is disordered; sequence MISLDKDENEIEHHNEENSLVEQETAP. The helical transmembrane segment at 129 to 151 threads the bilayer; the sequence is IVTVLIGIIVAIFVLVVIGIAAF.

Its subcellular location is the membrane. This is an uncharacterized protein from Bacillus subtilis (strain 168).